We begin with the raw amino-acid sequence, 244 residues long: 5-oxoprolinase subunit A (244 aa).

The protein belongs to the LamB/PxpA family. In terms of assembly, forms a complex composed of PxpA, PxpB and PxpC.

The enzyme catalyses 5-oxo-L-proline + ATP + 2 H2O = L-glutamate + ADP + phosphate + H(+). Catalyzes the cleavage of 5-oxoproline to form L-glutamate coupled to the hydrolysis of ATP to ADP and inorganic phosphate. This is 5-oxoprolinase subunit A from Shigella flexneri.